The primary structure comprises 329 residues: MVSIAINGFGRIGRLVLRIALERKNIDVVAINDPFISVDYAAYMFKYDSTHGKYKGEVSHDGSNLIINGKKVAVFQEKDPATLPWGKLGVDIAVDSTGVFKELDSAQKHIDAGAKKVVITAPSKTAPMFVVGVNEDKYNGEKIVSNASCTTNCLAPIAKIINDEFGIEEGLMTTVHSITATQKTVDGPSHKDWRGGRTASGNIIPSSTGAAKAVGKVLPELQGKLTGMAFRVPTTDVSVVDLTVKLVKAATYDEIKAAVKKVSEGKLKDVVGYTEDAVVSSDFLGDTHSTIFDAAAGIQLSPKFVKLVAWYDNEYGYSTRVVDLVEHVA.

Residues 11-12, aspartate 33, and glutamate 77 each bind NAD(+); that span reads RI. Serine 148 is subject to Phosphoserine. Residue 148–150 coordinates D-glyceraldehyde 3-phosphate; the sequence is SCT. Cysteine 149 serves as the catalytic Nucleophile. Phosphoserine is present on serine 177. A D-glyceraldehyde 3-phosphate-binding site is contributed by threonine 179. The residue at position 200 (serine 200) is a Phosphoserine. D-glyceraldehyde 3-phosphate-binding positions include 208–209 and arginine 231; that span reads TG. Asparagine 313 serves as a coordination point for NAD(+).

It belongs to the glyceraldehyde-3-phosphate dehydrogenase family. Homotetramer.

It is found in the cytoplasm. The enzyme catalyses D-glyceraldehyde 3-phosphate + phosphate + NAD(+) = (2R)-3-phospho-glyceroyl phosphate + NADH + H(+). It functions in the pathway carbohydrate degradation; glycolysis; pyruvate from D-glyceraldehyde 3-phosphate: step 1/5. This Kluyveromyces marxianus (Yeast) protein is Glyceraldehyde-3-phosphate dehydrogenase 1.